A 749-amino-acid polypeptide reads, in one-letter code: MTNSQYSPQPMAAEFSEAMEKLVNACYSDPFRVLGPHPYQKGIVVRAYLPHAIQAWIGTEPPQEMARSSAINLFEWHGKAKALPLPYQVLWEDKMGFTHYEYDPYCFPPQLSDYDLHLFGEGKHWHVYRILGSHPVIVDGTSGVLFATWAPEAERVSIVGDFNRWDGRCHPMQLRGLTGVWELFIPGLKPGTLYKYELRNRNRGSIHLKSDPYGQRFEQRPHTASIVAAKTNYLWQDRKWMEQRKQFDWLHQPISVYEVHLGSWQRGENGAFLNYRQLARQLVDYVLKTGFTHIELLPVTEHPLDASWGYQTTGYFAPTSRFGSPDEFRYFVDHCHLHGIGVLMDWVPGHFPKDAHGLAQFDGSALYEHEDPRLGEHRDWGTLIFNYGRHEVRNFLLSSALYWLEEFHIDGLRVDAVASMLYLDYSRQEGDWIPNKYGGRENLEAIDFLRELNKVLHAQHPGVLVIAEESTSWPMVSHPIYVGGLGFSMKWNMGWMNDTLSYMSKDPIYRHYHHDALTFGLLYAFNENFMLPLSHDEVVHGKQSLLYKMPGDEWQRFANLRLLYTMMFTYPGKKLLFMGCEFGQGEEWNESRSLDWYLLNYPVHQGVQAAIKDLNHLYRSLPALNYYDFAKEGFEWIDCHDSAQSVLSYLRLKDGDFVIVVLNFTPVPRTNYRLGVPKSGVYLECFNSDSTYYGGSNMGNSQTIQTDSITWMGRPYSINITVPPLAGIVLRLKTPASKMPATAPLSPGK.

Asp415 functions as the Nucleophile in the catalytic mechanism. The active-site Proton donor is Glu468.

This sequence belongs to the glycosyl hydrolase 13 family. GlgB subfamily. Monomer.

The catalysed reaction is Transfers a segment of a (1-&gt;4)-alpha-D-glucan chain to a primary hydroxy group in a similar glucan chain.. It functions in the pathway glycan biosynthesis; glycogen biosynthesis. In terms of biological role, catalyzes the formation of the alpha-1,6-glucosidic linkages in glycogen by scission of a 1,4-alpha-linked oligosaccharide from growing alpha-1,4-glucan chains and the subsequent attachment of the oligosaccharide to the alpha-1,6 position. The polypeptide is 1,4-alpha-glucan branching enzyme GlgB (Nitrosococcus oceani (strain ATCC 19707 / BCRC 17464 / JCM 30415 / NCIMB 11848 / C-107)).